The following is a 262-amino-acid chain: Thiamine thiazole synthase (262 aa).

NAD(+)-binding positions include alanine 36, 55 to 56 (EK), glycine 63, valine 127, and 154 to 156 (HVD). Fe cation is bound by residues aspartate 156 and histidine 171. An NAD(+)-binding site is contributed by methionine 224. Arginine 234 contributes to the glycine binding site.

The protein belongs to the THI4 family. In terms of assembly, homooctamer; tetramer of dimers. Fe(2+) serves as cofactor.

It carries out the reaction hydrogen sulfide + glycine + NAD(+) = ADP-5-ethyl-4-methylthiazole-2-carboxylate + nicotinamide + 3 H2O + H(+). It functions in the pathway cofactor biosynthesis; thiamine diphosphate biosynthesis. Its function is as follows. Involved in the biosynthesis of the thiazole moiety of thiamine. Catalyzes the conversion of NAD and glycine to adenosine diphosphate 5-(2-hydroxyethyl)-4-methylthiazole-2-carboxylate (ADT), an adenylated thiazole intermediate, using free sulfide as a source of sulfur. The chain is Thiamine thiazole synthase from Methanothrix thermoacetophila (strain DSM 6194 / JCM 14653 / NBRC 101360 / PT) (Methanosaeta thermophila).